Reading from the N-terminus, the 365-residue chain is Glucan endo-1,3-beta-glucosidase, basic vacuolar isoform (365 aa).

A signal peptide spans 1–32; the sequence is MSTLHKHNTPQMAAITLLGLLLVASSIEIAGA. The active-site Proton donor is Glu128. The active-site Nucleophile is the Glu273. A propeptide spans 349-365 (removed in mature form); sequence VSGSVETNATASLISEI. The N-linked (GlcNAc...) asparagine glycan is linked to Asn356.

It belongs to the glycosyl hydrolase 17 family.

The protein resides in the vacuole. The catalysed reaction is Hydrolysis of (1-&gt;3)-beta-D-glucosidic linkages in (1-&gt;3)-beta-D-glucans.. Its function is as follows. Implicated in the defense of plants against pathogens. The sequence is that of Glucan endo-1,3-beta-glucosidase, basic vacuolar isoform (GN2) from Nicotiana plumbaginifolia (Leadwort-leaved tobacco).